The sequence spans 110 residues: Ig kappa chain V region 3547 (110 aa).

The segment at 1–23 is framework-1; sequence AYDMTQTPSSVSAAVGGTVTINC. The segment at 24 to 34 is complementarity-determining-1; it reads QASEDISANLA. The interval 35–49 is framework-2; that stretch reads WYQQKPGQPPKLLIY. The tract at residues 50–56 is complementarity-determining-2; that stretch reads AASDLAS. A framework-3 region spans residues 57-88; sequence GVPSRFKGSGSGTEYTLTISGVQCADAATYYC. Positions 89–99 are complementarity-determining-3; sequence QSADYSGSAVT. The framework-4 stretch occupies residues 100-109; the sequence is FGGGTEVVVK.

The sequence is that of Ig kappa chain V region 3547 from Oryctolagus cuniculus (Rabbit).